A 298-amino-acid polypeptide reads, in one-letter code: Fluorinase (298 aa).

S-adenosyl-L-methionine-binding positions include Asp14, Asp19–Ser21, Tyr75, Ser156, Asp209, Asn214, Ser268–Arg269, and Arg276–Ala278.

This sequence belongs to the SAM hydrolase / SAM-dependent halogenase family.

The enzyme catalyses fluoride + S-adenosyl-L-methionine = 5'-deoxy-5'-fluoroadenosine + L-methionine. In terms of biological role, catalyzes the formation of a C-F bond by combining S-adenosyl-L-methionine (SAM) and fluoride to generate 5'-fluoro-5'-deoxyadenosine (5'-FDA) and L-methionine. This is Fluorinase from Actinoplanes sp. (strain N902-109).